Reading from the N-terminus, the 166-residue chain is Methylmalonyl-CoA epimerase, mitochondrial (166 aa).

Residues 1-23 (MFKQLIKTTLTNSRSFSTNTGSG) constitute a mitochondrion transit peptide. A VOC domain is found at 37–166 (KLNHVAIATP…NGVLVELEEK (130 aa)). The Co(2+) site is built by His40, His112, and Glu162.

This sequence belongs to the methylmalonyl-CoA epimerase family.

It is found in the mitochondrion. The catalysed reaction is (R)-methylmalonyl-CoA = (S)-methylmalonyl-CoA. In terms of biological role, methylmalonyl-CoA epimerase involved in propionyl-CoA metabolism. This is Methylmalonyl-CoA epimerase, mitochondrial (mcee) from Dictyostelium discoideum (Social amoeba).